The sequence spans 180 residues: MAEKRNIFLVGPMGAGKSTIGRQLAQQLNMDFIDSDAVIEERTGADISWIFDLEGEDGFRKREERIINELTQMQGIVLSTGGGAVLSKENRNYLSARGIVIYLETTVEKQFQRTQRDKKRPLLQDAENPRQVLEDLAKIRNPLYEEIADITLPTDEQNAKIMVNQIVDLIDNMNGLNGAL.

ATP is bound at residue 14–19; it reads GAGKST. Serine 18 is a Mg(2+) binding site. Positions 36, 60, and 82 each coordinate substrate. Arginine 120 provides a ligand contact to ATP. Residue arginine 140 coordinates substrate. Glutamine 157 is a binding site for ATP.

It belongs to the shikimate kinase family. In terms of assembly, monomer. Mg(2+) is required as a cofactor.

The protein resides in the cytoplasm. The catalysed reaction is shikimate + ATP = 3-phosphoshikimate + ADP + H(+). It functions in the pathway metabolic intermediate biosynthesis; chorismate biosynthesis; chorismate from D-erythrose 4-phosphate and phosphoenolpyruvate: step 5/7. In terms of biological role, catalyzes the specific phosphorylation of the 3-hydroxyl group of shikimic acid using ATP as a cosubstrate. The sequence is that of Shikimate kinase from Haemophilus influenzae (strain PittGG).